The sequence spans 167 residues: Ubiquitin-fold modifier-conjugating enzyme 1 (167 aa).

Residue cysteine 116 is the Glycyl thioester intermediate of the active site.

This sequence belongs to the ubiquitin-conjugating enzyme family. UFC1 subfamily.

In terms of biological role, E2-like enzyme which forms an intermediate with UFM1 via a thioester linkage. The sequence is that of Ubiquitin-fold modifier-conjugating enzyme 1 from Anopheles gambiae (African malaria mosquito).